The primary structure comprises 209 residues: Ribosomal RNA large subunit methyltransferase E (209 aa).

5 residues coordinate S-adenosyl-L-methionine: Gly63, Trp65, Asp83, Asp99, and Asp124. Lys164 (proton acceptor) is an active-site residue.

It belongs to the class I-like SAM-binding methyltransferase superfamily. RNA methyltransferase RlmE family.

It is found in the cytoplasm. It carries out the reaction uridine(2552) in 23S rRNA + S-adenosyl-L-methionine = 2'-O-methyluridine(2552) in 23S rRNA + S-adenosyl-L-homocysteine + H(+). Functionally, specifically methylates the uridine in position 2552 of 23S rRNA at the 2'-O position of the ribose in the fully assembled 50S ribosomal subunit. The chain is Ribosomal RNA large subunit methyltransferase E from Proteus mirabilis (strain HI4320).